A 98-amino-acid chain; its full sequence is Integration host factor subunit beta (98 aa).

The protein belongs to the bacterial histone-like protein family. Heterodimer of an alpha and a beta chain.

This protein is one of the two subunits of integration host factor, a specific DNA-binding protein that functions in genetic recombination as well as in transcriptional and translational control. This Marinobacter nauticus (strain ATCC 700491 / DSM 11845 / VT8) (Marinobacter aquaeolei) protein is Integration host factor subunit beta.